A 1477-amino-acid polypeptide reads, in one-letter code: Alpha-1-inhibitor 3 (1477 aa).

An N-terminal signal peptide occupies residues 1 to 24 (MKKDREAQLCLFSALLAFLPFASL). Cys48 and Cys86 are disulfide-bonded. N-linked (GlcNAc...) asparagine glycans are attached at residues Asn55 and Asn247. 2 cysteine pairs are disulfide-bonded: Cys251-Cys295 and Cys269-Cys283. N-linked (GlcNAc...) asparagine glycans are attached at residues Asn301, Asn321, Asn393, and Asn508. Intrachain disulfides connect Cys468–Cys563, Cys595–Cys774, and Cys643–Cys678. Positions 601–750 (DQSVLLQKPE…TWIWDLVTVN (150 aa)) are bait region (approximate). N-linked (GlcNAc...) asparagine glycans are attached at residues Asn750, Asn777, and Asn872. 4 disulfides stabilise this stretch: Cys850-Cys886, Cys924-Cys1324, Cys1082-Cys1130, and Cys1355-Cys1470. The segment at residues 975 to 978 (CGEQ) is a cross-link (isoglutamyl cysteine thioester (Cys-Gln)). A glycan (N-linked (GlcNAc...) asparagine) is linked at Asn994. Residues Asn1143, Asn1314, and Asn1427 are each glycosylated (N-linked (GlcNAc...) asparagine).

This sequence belongs to the protease inhibitor I39 (alpha-2-macroglobulin) family. Monomer.

The protein resides in the secreted. Functionally, protease inhibitor with a wide spectrum of protein targets, which attaches through its thioester function. The chain is Alpha-1-inhibitor 3 (A1i3) from Rattus norvegicus (Rat).